Consider the following 582-residue polypeptide: Protein LYRIC (582 aa).

The Lumenal segment spans residues 1–48 (MAARSWQDELAQQAEEGSARLREMLSVGLGFLRTELGLDLGLEPKRYP). The activation of NF-kappa-B stretch occupies residues 1-71 (MAARSWQDEL…LLLFLLGYGW (71 aa)). The chain crosses the membrane as a helical span at residues 49–69 (GWVILVGTGALGLLLLFLLGY). At 70-582 (GWAAACAGAR…KKKKKARRET (513 aa)) the chain is on the cytoplasmic side. The interaction with BCCIP stretch occupies residues 72–169 (AAACAGARKK…EKSKKNKKKS (98 aa)). A disordered region spans residues 78-222 (ARKKRRSPPR…DSGSLDSTIP (145 aa)). A compositionally biased stretch (low complexity) spans 93–106 (AAVPAAAPDDLALL). Residues 101 to 205 (DDLALLKNLR…ISHREKRQQR (105 aa)) are interaction with RELA. The span at 109 to 127 (LRSEEQKKKNRKKLSEKPK) shows a compositional bias: basic and acidic residues. Threonine 143 is subject to Phosphothreonine. A compositionally biased stretch (basic residues) spans 160–169 (EKSKKNKKKS). Position 180 is a phosphoserine (serine 180). The span at 198–208 (HREKRQQRKRD) shows a compositional bias: basic residues. Phosphoserine is present on residues serine 216 and serine 251. Lysine 264 carries the post-translational modification N6-acetyllysine. Residues 280 to 582 (TVNGGGWNEK…KKKKKARRET (303 aa)) are disordered. Serine 298, serine 306, serine 308, serine 311, serine 323, serine 339, serine 344, and serine 369 each carry phosphoserine. The span at 320–333 (SAWSQDTGDANTNG) shows a compositional bias: polar residues. Composition is skewed to polar residues over residues 354-372 (EPVS…SRNQ) and 383-394 (NGLSSADPNSDW). The lung-homing for mammary tumors stretch occupies residues 381–443 (GLNGLSSADP…EGALPTGKSK (63 aa)). Phosphoserine is present on residues serine 415 and serine 426. A compositionally biased stretch (basic and acidic residues) spans 421–434 (DDQKVSDDDKEKGE). The span at 441–451 (KSKKKKKKKKK) shows a compositional bias: basic residues. At serine 457 the chain carries Phosphoserine. Threonine 458 bears the Phosphothreonine mark. 3 positions are modified to phosphoserine: serine 478, serine 494, and serine 496. Polar residues-rich tracts occupy residues 504-520 (KNSQ…STEP) and 549-568 (NTKQ…SWES). The residue at position 568 (serine 568) is a Phosphoserine. The span at 571–582 (QIKKKKKARRET) shows a compositional bias: basic residues.

As to quaternary structure, interacts with BCCIP, CREBBP/CBP and RELA/p65. Widely expressed with highest levels in muscle-dominating organs such as skeletal muscle, heart, tongue and small intestine and in endocrine glands such as thyroid and adrenal gland. Overexpressed in various cancers including breast, brain, prostate, melanoma and glioblastoma multiforme.

It is found in the endoplasmic reticulum membrane. It localises to the nucleus membrane. Its subcellular location is the cell junction. The protein resides in the tight junction. The protein localises to the nucleus. It is found in the nucleolus. It localises to the cytoplasm. Its subcellular location is the perinuclear region. In terms of biological role, down-regulates SLC1A2/EAAT2 promoter activity when expressed ectopically. Activates the nuclear factor kappa-B (NF-kappa-B) transcription factor. Promotes anchorage-independent growth of immortalized melanocytes and astrocytes which is a key component in tumor cell expansion. Promotes lung metastasis and also has an effect on bone and brain metastasis, possibly by enhancing the seeding of tumor cells to the target organ endothelium. Induces chemoresistance. The protein is Protein LYRIC (MTDH) of Homo sapiens (Human).